The chain runs to 682 residues: Nisin leader peptide-processing serine protease NisP (682 aa).

A signal peptide spans 1–22 (MKKILGFLFIVCSLGLSATVHG). Positions 23-195 (ETTNSQQLLS…RKAKEVVSLR (173 aa)) are excised as a propeptide. The region spanning 231–566 (QWDMKYVTNN…VDLLNGKNKA (336 aa)) is the Peptidase S8 domain. Catalysis depends on charge relay system residues aspartate 259, histidine 306, and serine 512. Positions 652 to 656 (LPVTG) match the LPXTG sorting signal motif. Threonine 655 carries the pentaglycyl murein peptidoglycan amidated threonine modification. The propeptide at 656–682 (GDGEDFLPALGIVCISILGILKRKTKN) is removed by sortase.

It belongs to the peptidase S8 family.

Its subcellular location is the secreted. The protein resides in the cell wall. Its pathway is antibiotic biosynthesis; nisin biosynthesis. Its function is as follows. Cleaves the lantibiotic nisin precursor peptide. The sequence is that of Nisin leader peptide-processing serine protease NisP (nisP) from Lactococcus lactis subsp. lactis (Streptococcus lactis).